The following is a 235-amino-acid chain: Photosystem I assembly protein Ycf4 (235 aa).

A run of 2 helical transmembrane segments spans residues 21-43 (NLCW…TSSY) and 63-85 (GIVM…CTIL).

This sequence belongs to the Ycf4 family.

The protein resides in the plastid. Its subcellular location is the chloroplast thylakoid membrane. In terms of biological role, seems to be required for the assembly of the photosystem I complex. The sequence is that of Photosystem I assembly protein Ycf4 from Amborella trichopoda.